We begin with the raw amino-acid sequence, 157 residues long: Small ribosomal subunit protein bS16 (157 aa).

The span at 125–141 (KRKAAKKAAEEAAAKEA) shows a compositional bias: basic and acidic residues. A disordered region spans residues 125–157 (KRKAAKKAAEEAAAKEAEAEEAAEDKAEEESAE). Over residues 142–157 (EAEEAAEDKAEEESAE) the composition is skewed to acidic residues.

Belongs to the bacterial ribosomal protein bS16 family.

The polypeptide is Small ribosomal subunit protein bS16 (Corynebacterium kroppenstedtii (strain DSM 44385 / JCM 11950 / CIP 105744 / CCUG 35717)).